Reading from the N-terminus, the 554-residue chain is Carboxylesterase 1C (554 aa).

The N-terminal stretch at 1–18 (MWLHALVWASLAVCPILG) is a signal peptide. A glycan (N-linked (GlcNAc...) asparagine) is linked at Asn79. A disulfide bridge connects residues Cys87 and Cys116. Ser221 (acyl-ester intermediate) is an active-site residue. A disulfide bridge connects residues Cys273 and Cys284. N-linked (GlcNAc...) asparagine glycans are attached at residues Asn274 and Asn304. Glu342 acts as the Charge relay system in catalysis. N-linked (GlcNAc...) asparagine glycosylation is present at Asn377. Residue His455 is the Charge relay system of the active site. Ser473 bears the Phosphoserine mark. A glycan (N-linked (GlcNAc...) asparagine) is linked at Asn478. Positions 551–554 (TEHK) match the Prevents secretion from ER motif.

It belongs to the type-B carboxylesterase/lipase family. Expressed in lung, kidney and liver.

It is found in the endoplasmic reticulum lumen. The catalysed reaction is a carboxylic ester + H2O = an alcohol + a carboxylate + H(+). Functionally, involved in the detoxification of xenobiotics and in the activation of ester and amide prodrugs. Involved in the extracellular metabolism of lung surfactant. The protein is Carboxylesterase 1C (Ces1c) of Mus musculus (Mouse).